A 201-amino-acid chain; its full sequence is Ribonuclease HII (201 aa).

Positions 14-201 (NLIAGVDEVG…KPVKRILGIE (188 aa)) constitute an RNase H type-2 domain. Positions 20, 21, and 112 each coordinate a divalent metal cation.

Belongs to the RNase HII family. Requires Mn(2+) as cofactor. The cofactor is Mg(2+).

It localises to the cytoplasm. The enzyme catalyses Endonucleolytic cleavage to 5'-phosphomonoester.. Functionally, endonuclease that specifically degrades the RNA of RNA-DNA hybrids. The protein is Ribonuclease HII of Photobacterium profundum (strain SS9).